Here is a 211-residue protein sequence, read N- to C-terminus: Interleukin-6 (211 aa).

The signal sequence occupies residues 1–24 (MKFLSARDFQPVAFLGLMLLTATA). An intrachain disulfide couples Cys70 to Cys76. Ser79 is subject to Phosphoserine. Cys99 and Cys109 are disulfide-bonded.

This sequence belongs to the IL-6 superfamily. As to quaternary structure, component of a hexamer of two molecules each of IL6, IL6R and IL6ST; first binds to IL6R to associate with the signaling subunit IL6ST. Interacts with IL6R (via the N-terminal ectodomain); this interaction may be affected by IL6R-binding with SORL1, hence decreasing IL6 cis signaling. Interacts with SORL1 (via the N-terminal ectodomain); this interaction leads to IL6 internalization and lysosomal degradation. May form a trimeric complex with the soluble SORL1 ectodomain and soluble IL6R receptor; this interaction might stabilize circulating IL6, hence promoting IL6 trans signaling.

The protein resides in the secreted. In terms of biological role, cytokine with a wide variety of biological functions in immunity, tissue regeneration, and metabolism. Binds to IL6R, then the complex associates to the signaling subunit IL6ST/gp130 to trigger the intracellular IL6-signaling pathway. The interaction with the membrane-bound IL6R and IL6ST stimulates 'classic signaling', whereas the binding of IL6 and soluble IL6R to IL6ST stimulates 'trans-signaling'. Alternatively, 'cluster signaling' occurs when membrane-bound IL6:IL6R complexes on transmitter cells activate IL6ST receptors on neighboring receiver cells. Its function is as follows. IL6 is a potent inducer of the acute phase response. Rapid production of IL6 contributes to host defense during infection and tissue injury, but excessive IL6 synthesis is involved in disease pathology. In the innate immune response, is synthesized by myeloid cells, such as macrophages and dendritic cells, upon recognition of pathogens through toll-like receptors (TLRs) at the site of infection or tissue injury. In the adaptive immune response, is required for the differentiation of B-cells into immunoglolin-secreting cells. Plays a major role in the differentiation of CD4(+) T cell subsets. Essential factor for the development of T follicular helper (Tfh) cells that are required for the induction of germinal-center formation. Together with IL21, controls the early generation of Tfh cells and are critical for an effective antibody response to acute viral infection. Required to drive naive CD4(+) T cells to the Th17 lineage, through 'cluster signaling' by dendritic cells. Also required for proliferation of myeloma cells and the survival of plasmablast cells. Acts as an essential factor in bone homeostasis and on vessels directly or indirectly by induction of VEGF, resulting in increased angiogenesis activity and vascular permeability. Induces, through 'trans-signaling' and synergistically with IL1B and TNF, the production of VEGF. Involved in metabolic controls, is discharged into the bloodstream after muscle contraction increasing lipolysis and improving insulin resistance. 'Trans-signaling' in central nervous system regulates energy and glucose homeostasis. Mediates, through GLP-1, crosstalk between insulin-sensitive tissues, intestinal L cells and pancreatic islets to adapt to changes in insulin demand. Also acts as a myokine. Plays a protective role during liver injury, being required for maintenance of tissue regeneration. Also has a pivotal role in iron metabolism by regulating HAMP/hepcidin expression upon inflammation or bacterial infection. Through activation of IL6ST-YAP-NOTCH pathway, induces inflammation-induced epithelial regeneration. This chain is Interleukin-6, found in Rattus norvegicus (Rat).